A 429-amino-acid chain; its full sequence is Glutamate-1-semialdehyde 2,1-aminomutase 1 (429 aa).

Lysine 268 bears the N6-(pyridoxal phosphate)lysine mark.

It belongs to the class-III pyridoxal-phosphate-dependent aminotransferase family. HemL subfamily. In terms of assembly, homodimer. Pyridoxal 5'-phosphate is required as a cofactor.

Its subcellular location is the cytoplasm. The catalysed reaction is (S)-4-amino-5-oxopentanoate = 5-aminolevulinate. The protein operates within porphyrin-containing compound metabolism; protoporphyrin-IX biosynthesis; 5-aminolevulinate from L-glutamyl-tRNA(Glu): step 2/2. The chain is Glutamate-1-semialdehyde 2,1-aminomutase 1 from Staphylococcus saprophyticus subsp. saprophyticus (strain ATCC 15305 / DSM 20229 / NCIMB 8711 / NCTC 7292 / S-41).